The sequence spans 510 residues: Chorion transcription factor Cf2 (510 aa).

The segment covering 1–10 (MIKSTTNPQE) has biased composition (polar residues). The disordered stretch occupies residues 1 to 40 (MIKSTTNPQEQRLPRPEDQSPAPPPPPPSSATTSTAAPAT). Residues 30-40 (SATTSTAAPAT) show a composition bias toward low complexity. 2 consecutive C2H2-type zinc fingers follow at residues 74 to 97 (HYCPMCHQQFERPQHVADHMQLCH) and 125 to 148 (HPCFNCDEKFGNAVDLDEHHRLAH). The span at 222 to 237 (PEEQHHQQQLQAEHHH) shows a compositional bias: basic and acidic residues. Positions 222 to 279 (PEEQHHQQQLQAEHHHQQQHQQQQQQQQQQQELLEQQQREMQEQAQQQQVHHHQQDQD) are disordered. Residues 240 to 257 (QHQQQQQQQQQQQELLEQ) are compositionally biased toward low complexity. 5 consecutive C2H2-type zinc fingers follow at residues 366 to 388 (HKCPDCPKTFKTPGTLAMHRKIH), 401 to 423 (YTCSYCGKSFTQSNTLKQHTRIH), 429 to 451 (FRCGYCGRAFTVKDYLNKHLTTH), 457 to 479 (FHCGYCEKSFSVKDYLTKHIRTH), and 485 to 508 (YTCPYCDKRFTQRSALTVHTTKLH).

Isoform I is found in embryos, pupae and adult somatic tissue; isoform II occurs in embryos, pupae, ovaries, testis and to a lesser extent in adult somatic tissue.

The protein resides in the nucleus. Its function is as follows. Transcriptional regulator; binds to the promoter region of Cp15. Also binds to its own promoter, thus having a probable autoregulatory role. The polypeptide is Chorion transcription factor Cf2 (Cf2) (Drosophila melanogaster (Fruit fly)).